Reading from the N-terminus, the 63-residue chain is Bowman-Birk type proteinase inhibitor B-II (63 aa).

7 cysteine pairs are disulfide-bonded: Cys5-Cys62, Cys6-Cys23, Cys9-Cys57, Cys11-Cys21, Cys30-Cys37, Cys34-Cys49, and Cys39-Cys47.

Belongs to the Bowman-Birk serine protease inhibitor family.

This is Bowman-Birk type proteinase inhibitor B-II from Arachis hypogaea (Peanut).